The primary structure comprises 334 residues: Ornithine carbamoyltransferase subunit I (334 aa).

Carbamoyl phosphate-binding positions include 56–59 (STRT), glutamine 83, arginine 107, and 134–137 (HPTQ). L-ornithine contacts are provided by residues asparagine 168, aspartate 232, and 236–237 (SM). Cysteine 274 contributes to the Zn(2+) binding site. Carbamoyl phosphate-binding positions include 274–275 (CL) and arginine 320.

The protein belongs to the aspartate/ornithine carbamoyltransferase superfamily. OTCase family. In E.coli strain K12, trimer of identical or non-identical chains are composed of ArgI (I) and/or ArgF (F). The trimer has the following composition: FFI, FFF, FII, III. E.coli strains B and W, which are known to contain only ArgI, produce only a trimer of identical chains (III).

Its subcellular location is the cytoplasm. The enzyme catalyses carbamoyl phosphate + L-ornithine = L-citrulline + phosphate + H(+). Its pathway is amino-acid biosynthesis; L-arginine biosynthesis; L-arginine from L-ornithine and carbamoyl phosphate: step 1/3. Its activity is regulated as follows. Reversely inhibited by N-(N-Sulfodiaminophosphinyl)-L-ornithine. Zinc is an allosteric regulator of the substrate-bound enzyme and a competitive inhibitor of the free enzyme. Its function is as follows. Reversibly catalyzes the transfer of the carbamoyl group from carbamoyl phosphate (CP) to the N(epsilon) atom of ornithine (ORN) to produce L-citrulline, which is a substrate for argininosuccinate synthetase, the enzyme involved in the final step in arginine biosynthesis. The polypeptide is Ornithine carbamoyltransferase subunit I (Escherichia coli (strain K12)).